A 134-amino-acid chain; its full sequence is Small ribosomal subunit protein bS6 (134 aa).

Residues 99–134 (EPSAMMQKRDRDERKDRERGRRRDDDGYVGERNEEG) are disordered. Residues 105–134 (QKRDRDERKDRERGRRRDDDGYVGERNEEG) show a composition bias toward basic and acidic residues.

Belongs to the bacterial ribosomal protein bS6 family.

In terms of biological role, binds together with bS18 to 16S ribosomal RNA. In Methylobacterium sp. (strain 4-46), this protein is Small ribosomal subunit protein bS6.